A 298-amino-acid chain; its full sequence is Probable oxidoreductase (298 aa).

9 to 33 (VVTGGASGLGAETVRALAAAGAEVT) is a binding site for NAD(+). Ser-139 is a binding site for substrate. Tyr-165 (proton acceptor) is an active-site residue.

Belongs to the short-chain dehydrogenases/reductases (SDR) family.

The protein is Probable oxidoreductase of Streptomyces antibioticus.